The following is a 265-amino-acid chain: Phosphonoacetaldehyde hydrolase (265 aa).

Residue Asp-10 is the Nucleophile of the active site. Mg(2+) is bound by residues Asp-10 and Ala-12. The active-site Schiff-base intermediate with substrate is the Lys-51. Residue Asp-184 coordinates Mg(2+).

Belongs to the HAD-like hydrolase superfamily. PhnX family. Homodimer. The cofactor is Mg(2+).

The enzyme catalyses phosphonoacetaldehyde + H2O = acetaldehyde + phosphate + H(+). Involved in phosphonate degradation. The polypeptide is Phosphonoacetaldehyde hydrolase (Latilactobacillus sakei subsp. sakei (strain 23K) (Lactobacillus sakei subsp. sakei)).